The primary structure comprises 609 residues: X-ray repair cross-complementing protein 6 (609 aa).

Positions Met1 to Gly28 are disordered. At Ser2 the chain carries N-acetylserine. Position 2 is a phosphoserine (Ser2). At Ser6 the chain carries Phosphoserine; by PRKDC. Residues Gly12 to Leu24 are compositionally biased toward acidic residues. Ser27 carries the post-translational modification Phosphoserine. The active-site Schiff-base intermediate with DNA; for 5'-deoxyribose-5-phosphate lyase activity is the Lys31. Residue Lys31 is modified to N6-acetyllysine. Ser51 bears the Phosphoserine; by PRKDC mark. A Ku domain is found at Leu261–Lys468. The DNA-binding stretch occupies residues Val277 to Asp341. A Glycyl lysine isopeptide (Lys-Gly) (interchain with G-Cter in SUMO2) cross-link involves residue Lys287. Residue Ser306 is modified to Phosphoserine. N6-acetyllysine occurs at positions 317, 331, and 338. Lys317 is covalently cross-linked (Glycyl lysine isopeptide (Lys-Gly) (interchain with G-Cter in SUMO2)). An interaction with XRCC5 region spans residues Ser373–Val482. Thr455 carries the post-translational modification Phosphothreonine. Residue Lys461 is modified to N6-acetyllysine. A phosphoserine mark is found at Ser477 and Ser520. The interval Pro536–Glu562 is disordered. 3 positions are modified to N6-acetyllysine: Lys539, Lys542, and Lys544. Ser550 carries the post-translational modification Phosphoserine. The interaction with DEAF1 stretch occupies residues Ser550 to Asp609. Residues Lys553 and Lys556 each carry the N6-acetyllysine modification. Residue Lys556 forms a Glycyl lysine isopeptide (Lys-Gly) (interchain with G-Cter in SUMO2) linkage. Ser560 is subject to Phosphoserine. An N6,N6,N6-trimethyllysine modification is found at Lys570. The SAP domain occupies Leu573–Phe607. Residues Val578–Glu583 are interaction with BAX.

Belongs to the ku70 family. In terms of assembly, forms a heterodimer with XRCC5/Ku80; heterodimerization stabilizes XRCC5 protein. Component of the core long-range non-homologous end joining (NHEJ) complex (also named DNA-PK complex) composed of PRKDC, LIG4, XRCC4, XRCC6/Ku70, XRCC5/Ku86 and NHEJ1/XLF. Additional component of the NHEJ complex includes PAXX. Following autophosphorylation, PRKDC dissociates from DNA, leading to formation of the short-range NHEJ complex, composed of LIG4, XRCC4, XRCC6/Ku70, XRCC5/Ku86 and NHEJ1/XLF. The XRCC5-XRCC6 dimer also associates with NAA15, and this complex binds to the osteocalcin promoter and activates osteocalcin expression. In addition, XRCC6 interacts with the osteoblast-specific transcription factors MSX2, RUNX2 and DLX5. Interacts with ELF3. Interacts with ATP23. The XRCC5-XRRC6 dimer associates in a DNA-dependent manner with APEX1. Binds to CDK9 isoform 2. Identified in a complex with DEAF1 and XRCC5. Interacts with DEAF1 (via the SAND domain); the interaction is direct and may be inhibited by DNA-binding. Interacts with CLU. Interacts with NR4A3; the DNA-dependent protein kinase complex DNA-PK phosphorylates and activates NR4A3 and prevents NR4A3 ubiquitinylation and degradation. Interacts with CYREN isoform 1 (CYREN-1) and isoform 4 (CYREN-2) (via KBM motif). Interacts (via N-terminus) with HSF1 (via N-terminus); this interaction is direct and prevents XRCC5/XRCC6 heterodimeric binding and non-homologous end joining (NHEJ) repair activities induced by ionizing radiation (IR). Part of the HDP-RNP complex composed of at least HEXIM1, PRKDC, XRCC5, XRCC6, paraspeckle proteins (SFPQ, NONO, PSPC1, RBM14, and MATR3) and NEAT1 RNA. Interacts with HMBOX1. Interacts with ATF7. Interacts with APLF (via KBM motif). Interacts with WRN (via KBM motif). The XRCC5-XRCC6 dimer associates with ALKBH2. Interacts with TPRN; TPRN interacts with a number of DNA damage response proteins, is recruited to sites of DNA damage and may play a role in DNA damage repair. When not acetylated, interacts with BAX. Interacts with ERCC6L2. (Microbial infection) Interacts with human T-cell leukemia virus 1/HTLV-1 protein HBZ. Phosphorylation by PRKDC may enhance helicase activity. Phosphorylation of Ser-51 does not affect DNA repair. Post-translationally, ADP-ribosylated by PARP3. In terms of processing, methylation by SETD4 leads to accumulation in the cytoplasm and is a prerequisite for acetylation, possibly due to the change of subcellular from the nucleus to the cytosol initiated by methylation, acetylation occurring in the cytosol. Acetylation can be catalyzed in vitro by CREBBP/CBP and KAT2B/PCAF.

It is found in the nucleus. The protein localises to the chromosome. The protein resides in the cytoplasm. Single-stranded DNA-dependent ATP-dependent helicase that plays a key role in DNA non-homologous end joining (NHEJ) by recruiting DNA-PK to DNA. Required for double-strand break repair and V(D)J recombination. Also has a role in chromosome translocation. Has a role in chromosome translocation. The DNA helicase II complex binds preferentially to fork-like ends of double-stranded DNA in a cell cycle-dependent manner. It works in the 3'-5' direction. During NHEJ, the XRCC5-XRRC6 dimer performs the recognition step: it recognizes and binds to the broken ends of the DNA and protects them from further resection. Binding to DNA may be mediated by XRCC6. The XRCC5-XRRC6 dimer acts as a regulatory subunit of the DNA-dependent protein kinase complex DNA-PK by increasing the affinity of the catalytic subunit PRKDC to DNA by 100-fold. The XRCC5-XRRC6 dimer is probably involved in stabilizing broken DNA ends and bringing them together. The assembly of the DNA-PK complex to DNA ends is required for the NHEJ ligation step. Probably also acts as a 5'-deoxyribose-5-phosphate lyase (5'-dRP lyase), by catalyzing the beta-elimination of the 5' deoxyribose-5-phosphate at an abasic site near double-strand breaks. 5'-dRP lyase activity allows to 'clean' the termini of abasic sites, a class of nucleotide damage commonly associated with strand breaks, before such broken ends can be joined. The XRCC5-XRRC6 dimer together with APEX1 acts as a negative regulator of transcription. In association with NAA15, the XRCC5-XRRC6 dimer binds to the osteocalcin promoter and activates osteocalcin expression. Plays a role in the regulation of DNA virus-mediated innate immune response by assembling into the HDP-RNP complex, a complex that serves as a platform for IRF3 phosphorylation and subsequent innate immune response activation through the cGAS-STING pathway. Negatively regulates apoptosis by interacting with BAX and sequestering it from the mitochondria. Might have deubiquitination activity, acting on BAX. The sequence is that of X-ray repair cross-complementing protein 6 (XRCC6) from Homo sapiens (Human).